Here is a 263-residue protein sequence, read N- to C-terminus: Putative steroid dehydrogenase 4 (263 aa).

The active-site Proton acceptor is the tyrosine 154.

It belongs to the short-chain dehydrogenases/reductases (SDR) family. 17-beta-HSD 3 subfamily.

This is Putative steroid dehydrogenase 4 (stdh-4) from Caenorhabditis elegans.